A 23-amino-acid chain; its full sequence is Apolipophorin-3 (23 aa).

This sequence belongs to the insect apolipophorin-3 family. As to quaternary structure, equilibrium between a soluble monomer and a bound lipoprotein form. Apolipophorin-3 associates with lipophorin during lipid loading until each particle contains 9 or 14 molecules of apolipophorin-3. In terms of tissue distribution, hemolymph.

The protein resides in the secreted. Assists in the loading of diacylglycerol, generated from triacylglycerol stores in the fat body through the action of adipokinetic hormone, into lipophorin, the hemolymph lipoprotein. It increases the lipid carrying capacity of lipophorin by covering the expanding hydrophobic surface resulting from diacylglycerol uptake. It thus plays a critical role in the transport of lipids during flight in several species of insects. In Melanoplus sanguinipes (Migratory grasshopper), this protein is Apolipophorin-3.